A 508-amino-acid chain; its full sequence is Photosystem II CP47 reaction center protein (508 aa).

Transmembrane regions (helical) follow at residues 21 to 36, 101 to 115, 140 to 156, 203 to 218, 237 to 252, and 457 to 472; these read AVHIMHTALVSGWAGS, IVFSGLCFLAAIWHW, GIHLFLSGAACFGFGAF, IAAGILGILAGLFHLS, VLSSSIAAVFFAAFIV, and TFALLFFFGHIWHGAR.

Belongs to the PsbB/PsbC family. PsbB subfamily. As to quaternary structure, PSII is composed of 1 copy each of membrane proteins PsbA, PsbB, PsbC, PsbD, PsbE, PsbF, PsbH, PsbI, PsbJ, PsbK, PsbL, PsbM, PsbT, PsbX, PsbY, PsbZ, Psb30/Ycf12, at least 3 peripheral proteins of the oxygen-evolving complex and a large number of cofactors. It forms dimeric complexes. It depends on Binds multiple chlorophylls. PSII binds additional chlorophylls, carotenoids and specific lipids. as a cofactor.

It localises to the plastid. Its subcellular location is the chloroplast thylakoid membrane. Its function is as follows. One of the components of the core complex of photosystem II (PSII). It binds chlorophyll and helps catalyze the primary light-induced photochemical processes of PSII. PSII is a light-driven water:plastoquinone oxidoreductase, using light energy to abstract electrons from H(2)O, generating O(2) and a proton gradient subsequently used for ATP formation. The protein is Photosystem II CP47 reaction center protein of Cryptomeria japonica (Japanese cedar).